A 496-amino-acid chain; its full sequence is Glutamyl-tRNA(Gln) amidotransferase subunit A (496 aa).

Residues Lys-75 and Ser-150 each act as charge relay system in the active site. Ser-174 (acyl-ester intermediate) is an active-site residue.

It belongs to the amidase family. GatA subfamily. In terms of assembly, heterotrimer of A, B and C subunits.

It carries out the reaction L-glutamyl-tRNA(Gln) + L-glutamine + ATP + H2O = L-glutaminyl-tRNA(Gln) + L-glutamate + ADP + phosphate + H(+). Functionally, allows the formation of correctly charged Gln-tRNA(Gln) through the transamidation of misacylated Glu-tRNA(Gln) in organisms which lack glutaminyl-tRNA synthetase. The reaction takes place in the presence of glutamine and ATP through an activated gamma-phospho-Glu-tRNA(Gln). The polypeptide is Glutamyl-tRNA(Gln) amidotransferase subunit A (Burkholderia mallei (strain NCTC 10247)).